We begin with the raw amino-acid sequence, 102 residues long: NADH-quinone oxidoreductase subunit K (102 aa).

A run of 3 helical transmembrane segments spans residues 5-25 (LTQY…GIIL), 30-50 (IIII…NLVA), and 62-82 (IFAL…LAIL).

This sequence belongs to the complex I subunit 4L family. NDH-1 is composed of 14 different subunits. Subunits NuoA, H, J, K, L, M, N constitute the membrane sector of the complex.

It localises to the cell inner membrane. The catalysed reaction is a quinone + NADH + 5 H(+)(in) = a quinol + NAD(+) + 4 H(+)(out). NDH-1 shuttles electrons from NADH, via FMN and iron-sulfur (Fe-S) centers, to quinones in the respiratory chain. The immediate electron acceptor for the enzyme in this species is believed to be ubiquinone. Couples the redox reaction to proton translocation (for every two electrons transferred, four hydrogen ions are translocated across the cytoplasmic membrane), and thus conserves the redox energy in a proton gradient. The chain is NADH-quinone oxidoreductase subunit K from Beijerinckia indica subsp. indica (strain ATCC 9039 / DSM 1715 / NCIMB 8712).